The primary structure comprises 183 residues: MRKLLRPFYERDTVLVAKELLGKYLVHHDGLEEKIGRIVEVEAYLGQHDLACHSSKGLTKRTKVMFGPAGYAYVYLIYGMYYCMNVVTEKEGIGSAVLIRALEPIKNIQDRTQGPGLLSKAMRIDSKLNHRDLLSNDFYIAEPNSPTDFTIIEKPRIGVHYAKEWANELLRFYIKDNPYISKT.

It belongs to the DNA glycosylase MPG family.

The protein is Putative 3-methyladenine DNA glycosylase of Legionella pneumophila subsp. pneumophila (strain Philadelphia 1 / ATCC 33152 / DSM 7513).